The following is a 1029-amino-acid chain: mRNA 3'-end-processing protein rna14 (1029 aa).

2 disordered regions span residues 1 to 177 (MAEE…PDVS) and 225 to 251 (GNVQ…PHDR). A compositionally biased stretch (basic and acidic residues) spans 21–32 (VDYKAVEEHGAD). Composition is skewed to polar residues over residues 43–79 (KTLQ…NSVQ) and 104–119 (TSTM…QPKT). Over residues 127–140 (VEDEDEDDAGDADY) the composition is skewed to acidic residues. Residues 153–175 (TVATNVPQQSVSGNENEASSTPD) show a composition bias toward polar residues. A compositionally biased stretch (low complexity) spans 229-243 (DSATATPTPDSPSTS). 6 HAT repeats span residues 281-313 (NRFD…MESE), 315-346 (NDLY…YVRR), 357-392 (QARR…FIKS), 406-439 (QKMD…FEMG), 469-509 (ITRD…WEKG), and 521-553 (AFKG…FCFL). 3 disordered regions span residues 634–664 (TFAK…ESVK), 853–951 (TAVR…GSPA), and 996–1023 (IPLP…SPSL). The segment covering 894–908 (SPKRPLEDFDDDYNR) has biased composition (basic and acidic residues). Polar residues-rich tracts occupy residues 932–949 (RSQL…SQGS) and 1006–1023 (GTTQ…SPSL).

The protein resides in the nucleus. It is found in the cytoplasm. Component of the cleavage factor IA (CFIA) complex, which is involved in the endonucleolytic cleavage during polyadenylation-dependent pre-mRNA 3'-end formation. The polypeptide is mRNA 3'-end-processing protein rna14 (rna14) (Aspergillus fumigatus (strain ATCC MYA-4609 / CBS 101355 / FGSC A1100 / Af293) (Neosartorya fumigata)).